Consider the following 465-residue polypeptide: UDP-N-acetylmuramate--L-alanine ligase (465 aa).

114–120 (GTHGKTT) contacts ATP.

It belongs to the MurCDEF family.

It localises to the cytoplasm. It carries out the reaction UDP-N-acetyl-alpha-D-muramate + L-alanine + ATP = UDP-N-acetyl-alpha-D-muramoyl-L-alanine + ADP + phosphate + H(+). It functions in the pathway cell wall biogenesis; peptidoglycan biosynthesis. Functionally, cell wall formation. This chain is UDP-N-acetylmuramate--L-alanine ligase, found in Chelativorans sp. (strain BNC1).